A 196-amino-acid chain; its full sequence is Recombination protein RecR (196 aa).

Residues 57-72 form a C4-type zinc finger; that stretch reads CERCHTFTQADICATC. The Toprim domain maps to 80–175; it reads SKLCVVETPA…RLTRLARGVP (96 aa).

This sequence belongs to the RecR family.

In terms of biological role, may play a role in DNA repair. It seems to be involved in an RecBC-independent recombinational process of DNA repair. It may act with RecF and RecO. The chain is Recombination protein RecR from Albidiferax ferrireducens (strain ATCC BAA-621 / DSM 15236 / T118) (Rhodoferax ferrireducens).